We begin with the raw amino-acid sequence, 185 residues long: MISASDFRKGVTFEMNGEPYVVLDFQHVKPGKGAAFVRTKYKNLKNGGTREEAFNPSDKFPKAHIETKEMQYLYSDGELYYFMDNETFEQTPLTYEEVEDAIKFLKENDNATIKFYHGKPFQVDPPNFVELQITETEPGVKGDTASNVTKTATVETGAVIHVPLFVNEGDTVRIDTRTGEYMSRV.

This sequence belongs to the elongation factor P family.

It localises to the cytoplasm. Its pathway is protein biosynthesis; polypeptide chain elongation. Involved in peptide bond synthesis. Stimulates efficient translation and peptide-bond synthesis on native or reconstituted 70S ribosomes in vitro. Probably functions indirectly by altering the affinity of the ribosome for aminoacyl-tRNA, thus increasing their reactivity as acceptors for peptidyl transferase. The sequence is that of Elongation factor P from Alkaliphilus oremlandii (strain OhILAs) (Clostridium oremlandii (strain OhILAs)).